The primary structure comprises 302 residues: Sulfate adenylyltransferase subunit 2 (302 aa).

Residues 280 to 302 (RQGRLIDSDQSASMEQKKRQGYF) are disordered.

Belongs to the PAPS reductase family. CysD subfamily. Heterodimer composed of CysD, the smaller subunit, and CysN.

The enzyme catalyses sulfate + ATP + H(+) = adenosine 5'-phosphosulfate + diphosphate. The protein operates within sulfur metabolism; hydrogen sulfide biosynthesis; sulfite from sulfate: step 1/3. With CysN forms the ATP sulfurylase (ATPS) that catalyzes the adenylation of sulfate producing adenosine 5'-phosphosulfate (APS) and diphosphate, the first enzymatic step in sulfur assimilation pathway. APS synthesis involves the formation of a high-energy phosphoric-sulfuric acid anhydride bond driven by GTP hydrolysis by CysN coupled to ATP hydrolysis by CysD. This Shewanella baltica (strain OS195) protein is Sulfate adenylyltransferase subunit 2.